A 425-amino-acid chain; its full sequence is 3-phosphoshikimate 1-carboxyvinyltransferase (425 aa).

Residues Lys22, Ser23, and Arg27 each coordinate 3-phosphoshikimate. Lys22 lines the phosphoenolpyruvate pocket. Residues Gly95 and Arg123 each coordinate phosphoenolpyruvate. Ser169, Ser170, Gln171, Ser197, Asp313, Asn336, and Lys340 together coordinate 3-phosphoshikimate. Gln171 is a phosphoenolpyruvate binding site. The active-site Proton acceptor is Asp313. Phosphoenolpyruvate-binding residues include Arg344, Arg386, and Lys411.

It belongs to the EPSP synthase family. As to quaternary structure, monomer.

It is found in the cytoplasm. It carries out the reaction 3-phosphoshikimate + phosphoenolpyruvate = 5-O-(1-carboxyvinyl)-3-phosphoshikimate + phosphate. Its pathway is metabolic intermediate biosynthesis; chorismate biosynthesis; chorismate from D-erythrose 4-phosphate and phosphoenolpyruvate: step 6/7. Catalyzes the transfer of the enolpyruvyl moiety of phosphoenolpyruvate (PEP) to the 5-hydroxyl of shikimate-3-phosphate (S3P) to produce enolpyruvyl shikimate-3-phosphate and inorganic phosphate. This is 3-phosphoshikimate 1-carboxyvinyltransferase from Pseudoalteromonas translucida (strain TAC 125).